The following is a 200-amino-acid chain: Phospholipase A2 inhibitor gamma subunit B (200 aa).

The N-terminal stretch at 1–19 is a signal peptide; it reads MKSFLFCCLLGTFLAIGMC. Intrachain disulfides connect Cys-22–Cys-46, Cys-25–Cys-32, Cys-39–Cys-67, Cys-73–Cys-94, Cys-95–Cys-100, Cys-120–Cys-145, Cys-138–Cys-165, and Cys-171–Cys-191. The N-linked (GlcNAc...) asparagine glycan is linked to Asn-33.

Belongs to the CNF-like-inhibitor family. As to quaternary structure, heterodimer of subunit A and subunit B. Expressed by the liver.

The protein localises to the secreted. Its function is as follows. Inhibits the enzymatic activity of phospholipase A2 (PA2). The chain is Phospholipase A2 inhibitor gamma subunit B from Gloydius brevicaudus siniticus (Chinese mamushi).